Here is a 454-residue protein sequence, read N- to C-terminus: L-cysteine desulfhydrase-like protein lolT1 (454 aa).

An N6-(pyridoxal phosphate)lysine modification is found at Lys227.

It belongs to the class-V pyridoxal-phosphate-dependent aminotransferase family. Pyridoxal 5'-phosphate is required as a cofactor.

The protein operates within alkaloid biosynthesis. Its function is as follows. L-cysteine desulfhydrase-like protein; part of the gene cluster that mediates the biosynthesis of loline alkaloids, potent insecticidal agents composed of a pyrrolizidine ring system and an uncommon ether bridge linking carbons 2 and 7. Lolines are structurally differentiated by the various modifications of the L-amino group and include norloline, loline, N-methylloline, N-acetylloline, N-acetylnorloline, and N-formylloline. The first committed step is the condensation of O-acetyl-L-homoserine (derived from L-aspartic acid) and L-proline, probably catalyzed by the gamma-type pyridoxal 5'-phosphate(PLP)-dependent enzyme lolC, to give the diamino diacid, NACPP. Ensuing cyclization, decarboxylation, and acetylation steps yield 1-exo-acetamidopyrrolizidine (AcAP). LolO is required for installation of the ether bridge upon the pathway intermediate, 1-exo-acetamidopyrrolizidine (AcAP). In sequential 2-oxoglutarate- and O(2)-consuming steps, lolO removes hydrogens from C2 and C7 of AcAP to form both carbon-oxygen bonds in N-acetylnorloline (NANL), the precursor to all other lolines. The enzymes lolD, lolE, lolF and lolT have also been proposed to be involved in the ether-bridge installation. Further processing of the exocyclic moiety of NANL by fungal N-acetamidase (LolN), methyltransferase (LolM), and cytochrome P450 (LolP) enzymes, with occasional involvement of a plant acetyltransferase, generates the other known lolines. LolN transforms NANL to norlonine which is monomethylated and dimethylated to respectively lonine and N-methyllonine (NML) by lolM. LolP catalyzes hydroxylation of the methyl group in N-methylloline (NML) and further oxygenation to N-formylloline (NFL). A plant acetyltransferase is responsible for the acetylation of loline to form N-acetylloline (NAL). LolA might interact with aspartate kinase to prevent feedback inhibition of its activity by these end products and thereby promote production of L-homoserine from L-aspartate. In Epichloe uncinata (Endophyte fungus), this protein is L-cysteine desulfhydrase-like protein lolT1.